A 118-amino-acid chain; its full sequence is Ribonuclease P protein component 2 (118 aa).

The protein belongs to the eukaryotic/archaeal RNase P protein component 2 family. In terms of assembly, consists of a catalytic RNA component and at least 4-5 protein subunits.

The protein resides in the cytoplasm. It catalyses the reaction Endonucleolytic cleavage of RNA, removing 5'-extranucleotides from tRNA precursor.. Its function is as follows. Part of ribonuclease P, a protein complex that generates mature tRNA molecules by cleaving their 5'-ends. This Pyrococcus abyssi (strain GE5 / Orsay) protein is Ribonuclease P protein component 2.